A 272-amino-acid polypeptide reads, in one-letter code: Iodotyrosine deiodinase (272 aa).

Residues 5–25 traverse the membrane as a helical segment; it reads LSGVSYGLLAGILAMLIHLVY. Residues 82–86, Ser110, and 110–111 each bind FMN; these read RRSVR and SG. 4 residues coordinate 3-iodo-L-tyrosine: Ala112, Glu139, Tyr143, and Lys164. FMN contacts are provided by residues 219 to 221 and Arg261; that span reads TST.

Belongs to the nitroreductase family. Requires FMN as cofactor.

It localises to the membrane. The catalysed reaction is 2 iodide + L-tyrosine + 2 NADP(+) = 3,5-diiodo-L-tyrosine + 2 NADPH + H(+). The enzyme catalyses iodide + L-tyrosine + NADP(+) = 3-iodo-L-tyrosine + NADPH. It carries out the reaction 3-iodo-L-tyrosine + iodide + NADP(+) = 3,5-diiodo-L-tyrosine + NADPH + H(+). It catalyses the reaction L-tyrosine + chloride + NADP(+) = 3-chloro-L-tyrosine + NADPH. The catalysed reaction is bromide + L-tyrosine + NADP(+) = 3-bromo-L-tyrosine + NADPH. Its function is as follows. Catalyzes the dehalogenation of halotyrosines such as 3,5-diiodo-L-tyrosine. Likely to also catalyze the dehalogenation of other halotyrosines such as 3-bromo-L-tyrosine, 3-chloro-L-tyrosine and 3-iodo-L-tyrosine. The sequence is that of Iodotyrosine deiodinase from Hydra vulgaris (Hydra).